Reading from the N-terminus, the 296-residue chain is Non-homologous end joining protein Ku (296 aa).

The Ku domain occupies 11 to 187 (TFGLVNIPVK…ELPEAGEPSS (177 aa)). The interval 254-296 (AAARRRGDEHEAPARGERRHAAAAAARTTGRPRAARASRKKRG) is disordered. Positions 258–273 (RRGDEHEAPARGERRH) are enriched in basic and acidic residues. The span at 275 to 285 (AAAAARTTGRP) shows a compositional bias: low complexity. Positions 286–296 (RAARASRKKRG) are enriched in basic residues.

This sequence belongs to the prokaryotic Ku family. In terms of assembly, homodimer. Interacts with LigD.

Its function is as follows. With LigD forms a non-homologous end joining (NHEJ) DNA repair enzyme, which repairs dsDNA breaks with reduced fidelity. Binds linear dsDNA with 5'- and 3'- overhangs but not closed circular dsDNA nor ssDNA. Recruits and stimulates the ligase activity of LigD. This Anaeromyxobacter sp. (strain K) protein is Non-homologous end joining protein Ku.